Consider the following 65-residue polypeptide: Large ribosomal subunit protein uL29 (65 aa).

It belongs to the universal ribosomal protein uL29 family.

The sequence is that of Large ribosomal subunit protein uL29 (rpmC) from Buchnera aphidicola subsp. Acyrthosiphon pisum (strain APS) (Acyrthosiphon pisum symbiotic bacterium).